A 316-amino-acid polypeptide reads, in one-letter code: Melanocyte-stimulating hormone receptor (316 aa).

Over 1-37 (MPMQGAHRKLLGSLNSTPTATSNLGLAANHTGAPCLE) the chain is Extracellular. Residue Asn29 is glycosylated (N-linked (GlcNAc...) asparagine). Residues 38–63 (VSIPDGLFLSLGLVSLVENVLVVAAI) traverse the membrane as a helical segment. Over 64–72 (AKNRNLHSS) the chain is Cytoplasmic. Residues 73 to 93 (MYCFICCLALSDLLVSGSNML) form a helical membrane-spanning segment. At 94 to 118 (ETAVILLLEAGALATRTSVVQQLHN) the chain is on the extracellular side. The helical transmembrane segment at 119-140 (TIDVLTCSSMLCSLCFLGAIAV) threads the bilayer. Over 141 to 163 (DRYISIFYALRYHSIMTLPRAQR) the chain is Cytoplasmic. Residues 164 to 183 (AIAAIWVASVLSSTLFITYY) traverse the membrane as a helical segment. The Extracellular portion of the chain corresponds to 184–191 (DHAAVLLC). A helical membrane pass occupies residues 192 to 211 (LVVFFLAMLVLMAVLYVHML). Topologically, residues 212–240 (ARACQHAHGIIRLHKRQSPAHQGFGLRGA) are cytoplasmic. The helical transmembrane segment at 241–266 (ATLTILLGIFFLCWGPFFLHLTLVVF) threads the bilayer. The Extracellular portion of the chain corresponds to 267–279 (CPQHLTCSCIFKN). A helical membrane pass occupies residues 280–300 (FKVFLTLIICNTIIDPLIYAF). Residues 301-316 (RSQELRRTLKEVLCSW) lie on the Cytoplasmic side of the membrane. Cys314 is lipidated: S-palmitoyl cysteine.

Belongs to the G-protein coupled receptor 1 family. As to quaternary structure, interacts with MGRN1, but does not undergo MGRN1-mediated ubiquitination; this interaction competes with GNAS-binding and thus inhibits agonist-induced cAMP production. Interacts with OPN3; the interaction results in a decrease in MC1R-mediated cAMP signaling and ultimately a decrease in melanin production in melanocytes.

It localises to the cell membrane. Its function is as follows. Receptor for MSH (alpha, beta and gamma) and ACTH. The activity of this receptor is mediated by G proteins which activate adenylate cyclase. Mediates melanogenesis, the production of eumelanin (black/brown) and phaeomelanin (red/yellow), via regulation of cAMP signaling in melanocytes. In Leontocebus fuscicollis (Brown-mantled tamarin), this protein is Melanocyte-stimulating hormone receptor (MC1R).